Here is a 200-residue protein sequence, read N- to C-terminus: Probable molybdenum cofactor guanylyltransferase (200 aa).

Residues 9-11 (LAG), Lys-21, Asp-69, and Asp-100 contribute to the GTP site. A Mg(2+)-binding site is contributed by Asp-100.

This sequence belongs to the MobA family. Mg(2+) is required as a cofactor.

It is found in the cytoplasm. The catalysed reaction is Mo-molybdopterin + GTP + H(+) = Mo-molybdopterin guanine dinucleotide + diphosphate. In terms of biological role, transfers a GMP moiety from GTP to Mo-molybdopterin (Mo-MPT) cofactor (Moco or molybdenum cofactor) to form Mo-molybdopterin guanine dinucleotide (Mo-MGD) cofactor. This chain is Probable molybdenum cofactor guanylyltransferase, found in Bacillus thuringiensis (strain Al Hakam).